A 253-amino-acid polypeptide reads, in one-letter code: Ribosome maturation factor RimP (253 aa).

The span at 186 to 199 (RRGKAAEREKKRDL) shows a compositional bias: basic and acidic residues. Residues 186–253 (RRGKAAEREK…RARRGEIDPD (68 aa)) form a disordered region. Residues 201–216 (LAPPLAPHAKPAAQAK) show a composition bias toward low complexity. The span at 240–253 (LAADRARRGEIDPD) shows a compositional bias: basic and acidic residues.

This sequence belongs to the RimP family.

The protein resides in the cytoplasm. Its function is as follows. Required for maturation of 30S ribosomal subunits. The protein is Ribosome maturation factor RimP of Bradyrhizobium sp. (strain BTAi1 / ATCC BAA-1182).